Consider the following 104-residue polypeptide: Large ribosomal subunit protein uL24 (104 aa).

This sequence belongs to the universal ribosomal protein uL24 family. As to quaternary structure, part of the 50S ribosomal subunit.

Functionally, one of two assembly initiator proteins, it binds directly to the 5'-end of the 23S rRNA, where it nucleates assembly of the 50S subunit. Its function is as follows. One of the proteins that surrounds the polypeptide exit tunnel on the outside of the subunit. In Clostridium botulinum (strain Eklund 17B / Type B), this protein is Large ribosomal subunit protein uL24.